The sequence spans 433 residues: Actin-related protein 4 (433 aa).

The segment at 289–317 (GSDEEMNEEPSKPIEQTENNEVSQQDSSV) is disordered. Residues 302 to 317 (IEQTENNEVSQQDSSV) are compositionally biased toward polar residues.

Belongs to the actin family. ARP4 subfamily. As to quaternary structure, component of the NuA4 histone acetyltransferase complex, of the INO80 chromatin remodeling complex, and of the SWR1 chromatin remodeling complex.

Its subcellular location is the nucleus. Its function is as follows. Chromatin interaction component of the NuA4 histone acetyltransferase complex which is involved in transcriptional activation of selected genes principally by acetylation of nucleosomal histone H4 and H2A. The NuA4 complex is also involved in DNA repair. Is required for NuA4 complex integrity. Component of the SWR1 complex which mediates the ATP-dependent exchange of histone H2A for the H2A variant HZT1 leading to transcriptional regulation of selected genes by chromatin remodeling. Component of the INO80 complex which remodels chromatin by shifting nucleosomes and is involved in DNA repair. The sequence is that of Actin-related protein 4 (alp5) from Schizosaccharomyces pombe (strain 972 / ATCC 24843) (Fission yeast).